Here is a 143-residue protein sequence, read N- to C-terminus: Transcriptional regulator MraZ (143 aa).

2 SpoVT-AbrB domains span residues 5-47 (EYQH…PLNE) and 76-119 (ATEC…SDER).

It belongs to the MraZ family. Forms oligomers.

It localises to the cytoplasm. The protein localises to the nucleoid. The polypeptide is Transcriptional regulator MraZ (Enterococcus faecalis (strain ATCC 700802 / V583)).